Reading from the N-terminus, the 563-residue chain is Cytidine monophosphate-N-acetylneuraminic acid hydroxylase (563 aa).

In terms of domain architecture, Rieske spans 10 to 108 (LSPAETANLK…VEMDGNDGLF (99 aa)). The [2Fe-2S] cluster site is built by C50, H52, C71, and H74.

Belongs to the CMP-Neu5Ac hydroxylase family. [2Fe-2S] cluster serves as cofactor.

The protein resides in the cytoplasm. It catalyses the reaction CMP-N-acetyl-beta-neuraminate + 2 Fe(II)-[cytochrome b5] + O2 + 2 H(+) = CMP-N-glycoloyl-beta-neuraminate + 2 Fe(III)-[cytochrome b5] + H2O. It functions in the pathway amino-sugar metabolism; N-acetylneuraminate metabolism. Its function is as follows. Sialic acids are components of carbohydrate chains of glycoconjugates and are involved in cell-cell recognition and cell-pathogen interactions. Catalyzes the conversion of CMP-N-acetylneuraminic acid (CMP-Neu5Ac) into its hydroxylated derivative CMP-N-glycolylneuraminic acid (CMP-Neu5Gc), a sialic acid abundantly expressed at the surface of many cells. The polypeptide is Cytidine monophosphate-N-acetylneuraminic acid hydroxylase (CMAH) (Cricetulus griseus (Chinese hamster)).